Reading from the N-terminus, the 368-residue chain is F-box protein At3g17710 (368 aa).

One can recognise an F-box domain in the interval 1–46; it reads MASVKLPWDLEEEILSRLPPRSLVRFRTVCKHWNGLFSDKRFVKKH.

The chain is F-box protein At3g17710 from Arabidopsis thaliana (Mouse-ear cress).